An 825-amino-acid polypeptide reads, in one-letter code: MSMSHLYGKDEDSDGVEMENFEITDWDLQNEFNPNRRKHFQTKEEATYGMWAERDSDDERPSFGGKRSRDYSAPVNFISAGIRKPAAEEKSDSDSDSETQARRETFPKDFEAKKLRTGGNFKPSQRTFAGGIKSNTDFGSWERHTKGIGQKLLQKMGYVQGRGLGKNAQGIIAPIEAKQRKGKGAVGAYGSERTKQSIKDFPVVDSEEEEEKEFQKEMSQWRKDPGGGKKKPKYSYKTVEELKAKGKVGKSLSAPQKEISQVKVIDMTGREQKVYYSYSQLAHKHNIPGEAPGQGAKEEKPQGFALPELEHNLQLLIDMTEQEIIQNDRQLQYEQDMVVNLTHELEKLSEVLEREEKAIQNLSKVLETVEECERRIQPMCDNPLTLEECARIFEMLQDKYYEEYKMSEKADLSVAIVYPLMKDYFKDWNPLRDPTYGTDVMSKWKNLLEEGHLLSHSAHDASMDPYHRLLWETWVPLLRSIIAQWQPRNCAPMVDFLDCWVHLLPVWILDNILDQLIFPKLQKEVENWNPLTDTVPIHSWIHPWLPLMQSRLEPLFSPIRNKLANALQKWHPSDSSAKLILQPWKEVFTPGSWEAFMVKNILPKLGMCLSEFVINPHQQHMEVFHWVTDWEGMVSLSSIVGILEKHFFPKWLQVLCSWLSNNPNYEEITKWYLGWKSMFSDLVLAHPAIKDKFNEALDIMNRAVSSSVGAYMQPGARESIAYLTQTERRKDFQYEAMQERRDAESIAQRGIGAAAAVPMNFKDLIQSKAEEHNIVFMPLIGKRHEGKQLYNFNRIVIYIDRGVVFVQGEKTWVPTSLQSLIDMAK.

The disordered stretch occupies residues M1–N135. A compositionally biased stretch (acidic residues) spans E11–D25. 2 stretches are compositionally biased toward basic and acidic residues: residues Q41 to P61 and P85 to K114. A compositionally biased stretch (polar residues) spans K122–N135. The region spanning T145 to S191 is the G-patch domain.

The protein belongs to the TFP11/STIP family. Identified in the spliceosome C complex.

Its subcellular location is the nucleus. In terms of biological role, involved in pre-mRNA splicing, specifically in spliceosome disassembly during late-stage splicing events. The polypeptide is Tuftelin-interacting protein 11 (tfip11) (Xenopus tropicalis (Western clawed frog)).